The following is a 1442-amino-acid chain: Protein patched homolog 1 (1442 aa).

The interval 1 to 45 (MASAADALEPESGSSTAGGGSHPVRAARSARGRRRRSGGTRRAAA) is disordered. Residues 1–101 (MASAADALEP…GCYIQKNCGK (101 aa)) lie on the Cytoplasmic side of the membrane. A compositionally biased stretch (basic residues) spans 28–39 (RSARGRRRRSGG). Residues 102–122 (FLVVGLLYSAFAVGLRAANLE) traverse the membrane as a helical segment. Over 123–436 (TNVEELWVEV…LDDILKSFSD (314 aa)) the chain is Extracellular. Residues N141, N312, N349, and N414 are each glycosylated (N-linked (GlcNAc...) asparagine). The chain crosses the membrane as a helical span at residues 437–457 (VSVIRVASGYLLMLAYACLTM). The SSD domain maps to 438-598 (SVIRVASGYL…LLIFPAILSM (161 aa)). Over 458–472 (LRWDCAKSQGAVGLA) the chain is Cytoplasmic. A helical membrane pass occupies residues 473–493 (GVLLVALSVAAGLGLCSLIGI). Residues 494–501 (SFNAATTQ) are Extracellular-facing. The helical transmembrane segment at 502–522 (VLPFLALGVGVDDVFLLAHAF) threads the bilayer. Residues 523 to 547 (SETGQNKRIPFEDRTGECLKRTGAS) lie on the Cytoplasmic side of the membrane. The chain crosses the membrane as a helical span at residues 548–568 (VALTSISNVTAFFMAALIPIP). The Extracellular segment spans residues 569 to 577 (ALRAFSLQA). A helical membrane pass occupies residues 578–598 (AVVVVFNFAMVLLIFPAILSM). Residues 599 to 747 (DLYRREDRRL…HYAPFLLKPK (149 aa)) are Cytoplasmic-facing. Residues 748 to 768 (AKVVVIFLFLGLLGLSLYGTT) form a helical membrane-spanning segment. Residues 769 to 1026 (RVRDGLDLTD…WEQYIGLRHW (258 aa)) are Extracellular-facing. N-linked (GlcNAc...) asparagine glycosylation is found at N827, N874, and N999. A helical transmembrane segment spans residues 1027 to 1047 (LLLSISVVLACTFLVCALFLL). Over 1048 to 1053 (NPWTAG) the chain is Cytoplasmic. A helical membrane pass occupies residues 1054–1074 (IIVVVLALMTVELFGMMGLIG). Residues 1075-1082 (IKLSAVPV) lie on the Extracellular side of the membrane. The chain crosses the membrane as a helical span at residues 1083–1101 (VILIASVGIGVEFTVHIAL). Over 1102-1120 (AFLTAIGDKNRRAVLALEH) the chain is Cytoplasmic. The chain crosses the membrane as a helical span at residues 1121–1141 (MFAPVLDGAVSTLLGVLMLAG). Over 1142–1153 (SEFDFIVRYFFA) the chain is Extracellular. A helical transmembrane segment spans residues 1154-1174 (VLAILTILGVLNGLVLLPVLL). Residues 1175–1442 (SFFGPYPEVS…EERTAGKISE (268 aa)) lie on the Cytoplasmic side of the membrane. 2 disordered regions span residues 1188 to 1231 (GRNR…TTVS) and 1266 to 1338 (STVV…LNHK). Over residues 1217 to 1226 (SDSSDSEYSS) the composition is skewed to low complexity. Over residues 1276–1293 (QSSPRLQSNPEAGTQQVW) the composition is skewed to polar residues.

The protein belongs to the patched family. Post-translationally, glycosylation is necessary for SHH binding. Expression is seen in the embryonic neural tube, sclerotome, visceral mesoderm, and limb bud.

It is found in the membrane. Acts as a receptor for sonic hedgehog (SHH), indian hedgehog (IHH) and desert hedgehog (DHH). Associates with the smoothened protein (SMO) to transduce the hedgehog's proteins signal. This chain is Protein patched homolog 1 (PTCH1), found in Gallus gallus (Chicken).